Consider the following 49-residue polypeptide: MARFPEAEERLLNKKICMKCNARNAIRATRCRKCGYGTLRVKSKESKGA.

It belongs to the eukaryotic ribosomal protein eL40 family.

The chain is Large ribosomal subunit protein eL40 from Methanosarcina acetivorans (strain ATCC 35395 / DSM 2834 / JCM 12185 / C2A).